A 78-amino-acid chain; its full sequence is Large ribosomal subunit protein bL28 (78 aa).

This sequence belongs to the bacterial ribosomal protein bL28 family.

This is Large ribosomal subunit protein bL28 from Trichodesmium erythraeum (strain IMS101).